A 304-amino-acid polypeptide reads, in one-letter code: Sulfate adenylyltransferase subunit 2 (304 aa).

It belongs to the PAPS reductase family. CysD subfamily. In terms of assembly, heterodimer composed of CysD, the smaller subunit, and CysN.

It carries out the reaction sulfate + ATP + H(+) = adenosine 5'-phosphosulfate + diphosphate. It functions in the pathway sulfur metabolism; hydrogen sulfide biosynthesis; sulfite from sulfate: step 1/3. Functionally, with CysN forms the ATP sulfurylase (ATPS) that catalyzes the adenylation of sulfate producing adenosine 5'-phosphosulfate (APS) and diphosphate, the first enzymatic step in sulfur assimilation pathway. APS synthesis involves the formation of a high-energy phosphoric-sulfuric acid anhydride bond driven by GTP hydrolysis by CysN coupled to ATP hydrolysis by CysD. The chain is Sulfate adenylyltransferase subunit 2 from Acinetobacter baylyi (strain ATCC 33305 / BD413 / ADP1).